Here is a 241-residue protein sequence, read N- to C-terminus: Uridylate kinase (241 aa).

Residue 12–15 (KLSG) participates in ATP binding. The interval 20-25 (GDKGVG) is involved in allosteric activation by GTP. Position 54 (Gly-54) interacts with UMP. 2 residues coordinate ATP: Gly-55 and Arg-59. UMP is bound by residues Asp-74 and 135–142 (IGSPYFST). Asn-163, Tyr-169, and Asp-172 together coordinate ATP.

This sequence belongs to the UMP kinase family. As to quaternary structure, homohexamer.

It localises to the cytoplasm. The catalysed reaction is UMP + ATP = UDP + ADP. It functions in the pathway pyrimidine metabolism; CTP biosynthesis via de novo pathway; UDP from UMP (UMPK route): step 1/1. Its activity is regulated as follows. Allosterically activated by GTP. Inhibited by UTP. Catalyzes the reversible phosphorylation of UMP to UDP. In Streptococcus gordonii (strain Challis / ATCC 35105 / BCRC 15272 / CH1 / DL1 / V288), this protein is Uridylate kinase.